Consider the following 175-residue polypeptide: Urease accessory protein UreE (175 aa).

Residues 134–175 are disordered; the sequence is FQPESGAYGGGHHHGDESATDLHNPGHGPHRSVPKIHEFKPR.

Belongs to the UreE family.

Its subcellular location is the cytoplasm. Functionally, involved in urease metallocenter assembly. Binds nickel. Probably functions as a nickel donor during metallocenter assembly. The protein is Urease accessory protein UreE of Dechloromonas aromatica (strain RCB).